A 388-amino-acid chain; its full sequence is Processive diacylglycerol beta-glucosyltransferase (388 aa).

It belongs to the glycosyltransferase 28 family. UgtP subfamily.

It localises to the cell membrane. The enzyme catalyses a 1,2-diacyl-3-O-(beta-D-glucopyranosyl)-sn-glycerol + UDP-alpha-D-glucose = a 1,2-diacyl-3-O-(beta-D-Glc-(1-&gt;6)-beta-D-Glc)-sn-glycerol + UDP + H(+). It carries out the reaction a 1,2-diacyl-3-O-(beta-D-Glc-(1-&gt;6)-beta-D-Glc)-sn-glycerol + UDP-alpha-D-glucose = a 1,2-diacyl-3-O-(beta-D-Glc-(1-&gt;6)-beta-D-Glc-(1-&gt;6)-beta-D-Glc)-sn-glycerol + UDP + H(+). It catalyses the reaction a 1,2-diacyl-sn-glycerol + UDP-alpha-D-glucose = a 1,2-diacyl-3-O-(beta-D-glucopyranosyl)-sn-glycerol + UDP + H(+). It functions in the pathway glycolipid metabolism; diglucosyl-diacylglycerol biosynthesis. Functionally, processive glucosyltransferase involved in the biosynthesis of both the bilayer- and non-bilayer-forming membrane glucolipids. Is able to successively transfer up to three glucosyl residues to diacylglycerol (DAG), thereby catalyzing the formation of beta-monoglucosyl-DAG (3-O-(beta-D-glucopyranosyl)-1,2-diacyl-sn-glycerol), beta-diglucosyl-DAG (3-O-(beta-D-glucopyranosyl-beta-(1-&gt;6)-D-glucopyranosyl)-1,2-diacyl-sn-glycerol) and beta-triglucosyl-DAG (3-O-(beta-D-glucopyranosyl-beta-(1-&gt;6)-D-glucopyranosyl-beta-(1-&gt;6)-D-glucopyranosyl)-1,2-diacyl-sn-glycerol). Beta-diglucosyl-DAG is the predominant glycolipid found in Bacillales and is also used as a membrane anchor for lipoteichoic acid (LTA). The chain is Processive diacylglycerol beta-glucosyltransferase from Bacillus cereus (strain ATCC 10987 / NRS 248).